Reading from the N-terminus, the 468-residue chain is Secretogranin-3 (468 aa).

A signal peptide spans 1–19 (MGFLGTGTWILVLVLPIQA). The tract at residues 23 to 69 (PGGSQDKSLHNRELSAERPLNEQIAEAEEDKIKKTYPPENKPGQSNY) is disordered. A compositionally biased stretch (basic and acidic residues) spans 29-42 (KSLHNRELSAERPL). S37 is subject to Phosphoserine. Residue S37 is glycosylated (O-linked (Xyl...) (chondroitin sulfate) serine). T216 and T231 each carry an O-linked (GalNAc...) threonine glycan. The interval 353 to 406 (KLFPAPSEKSHEETDSTKEEAAKMEKEYGSLKDSTKDDNSNPGGKTDEPKGKTE) is disordered. Residue S359 is glycosylated (O-linked (GalNAc...) serine). The span at 360 to 406 (EKSHEETDSTKEEAAKMEKEYGSLKDSTKDDNSNPGGKTDEPKGKTE) shows a compositional bias: basic and acidic residues. At S362 the chain carries Phosphoserine.

As to quaternary structure, interacts with CHGA. Interacts with secretogranin II/SCG2. Interacts (via C-terminus) with CPE. In terms of processing, O-glycosylated. In terms of tissue distribution, detected in urine (at protein level). Expressed in brain, heart, kidney, liver and skeletal muscle.

Its subcellular location is the cytoplasmic vesicle. It localises to the secretory vesicle. It is found in the secretory vesicle membrane. The protein resides in the secreted. Member of the granin protein family that regulates the biogenesis of secretory granules. Acts as a sorting receptor for intragranular proteins including chromogranin A/CHGA. May also play a role in angiogenesis. Promotes endothelial proliferation, migration and tube formation through MEK/ERK signaling pathway. The polypeptide is Secretogranin-3 (SCG3) (Homo sapiens (Human)).